We begin with the raw amino-acid sequence, 564 residues long: MGKKYVIGIDYGTESGRAVLVDLEGNEIADHVTPYPHGVIDEVLPESNVQLEPDWALQHPGDYIEVLATAVPAVLQKSGVNPADVIGVGIDFTACTMLPVDASGEPLCLKPEFKHRPHSWVKLWKHHAAQDEANLLNEIAAKRGEAFLPRYGGKISSEWMIAKIWQILNEAPDIYDQTDLFLEATDWVIFKMTGQMVRNSCTAGYKSIWHKQDGYPSKEFFRALDPRLEHLTETKLRGPIVPLGTRAGVLTKEMAAMMGLLPGTAVAVGNVDAHAAVPGVGVVEPGKLVMAMGTSICHMLLGTEEKYVEGMCGVVEDGIIPGYFGYEAGQSAVGDIFAWYVEQGVPAYVKEAAEKEGVSVHEWLEKRAAAYRPGETGLLALDWWNGNRSVLVDTDLTGLIIGYTLLTKPEEVYRALLEATAFGTRKIIDAFVENGVNVDELYACGGLPQKNKLLMQIYADVTNREIKIAASKQTPAVGAAMFAAVAAGKENGGYESIVEAAQNMGKVREETFKPIPENVAIYEQLYQEYTKLHDYFGRGENDVMKRLKHWKETARAAKESMTLS.

It belongs to the ribulokinase family.

The catalysed reaction is D-ribulose + ATP = D-ribulose 5-phosphate + ADP + H(+). The enzyme catalyses L-ribulose + ATP = L-ribulose 5-phosphate + ADP + H(+). It participates in carbohydrate degradation; L-arabinose degradation via L-ribulose; D-xylulose 5-phosphate from L-arabinose (bacterial route): step 2/3. The sequence is that of Ribulokinase from Geobacillus thermodenitrificans (strain NG80-2).